Consider the following 96-residue polypeptide: Protein RnfH (96 aa).

It belongs to the UPF0125 (RnfH) family.

In Klebsiella pneumoniae (strain 342), this protein is Protein RnfH.